The sequence spans 555 residues: AP2-like ethylene-responsive transcription factor ANT (555 aa).

Disordered stretches follow at residues 34–56 and 199–231; these read GGRE…SVPP and LSMS…NHQQ. Low complexity-rich tracts occupy residues 41–53, 199–208, and 218–231; these read SSST…SSSS, LSMSPGSQSS, and QNQN…NHQQ. 2 consecutive DNA-binding regions (AP2/ERF) follow at residues 283–349 and 385–443; these read QYRG…TNFS and IYRG…TNFD.

It belongs to the AP2/ERF transcription factor family. AP2 subfamily. As to quaternary structure, interacts with ANL2, HDG2 and HDG10, and possibly with GL2, HDG3, HDG8, ATML1 and PDF2. As to expression, mostly expressed in developing flowers. Also present in mature flowers, siliques and seedlings, but not in mature roots, leaves and stems. Expressed in ovules and in vegetative and floral primordia.

It is found in the nucleus. Transcription activator that recognizes and binds to the DNA consensus sequence 5'-CAC[AG]N[AT]TNCCNANG-3'. Required for the initiation and growth of ovules integumenta, and for the development of female gametophyte. Plays a critical role in the development of gynoecium marginal tissues (e.g. stigma, style and septa), and in the fusion of carpels and of medial ridges leading to ovule primordia. Also involved in organs initiation and development, including floral organs. Maintains the meristematic competence of cells and consequently sustains expression of cell cycle regulators during organogenesis, thus controlling the final size of each organ by controlling their cell number. Regulates INO autoinduction and expression pattern. As ANT promotes petal cell identity and mediates down-regulation of AG in flower whorl 2, it functions as a class A homeotic gene. The sequence is that of AP2-like ethylene-responsive transcription factor ANT from Arabidopsis thaliana (Mouse-ear cress).